Reading from the N-terminus, the 701-residue chain is Lutropin-choriogonadotropic hormone receptor (701 aa).

An N-terminal signal peptide occupies residues 1 to 26 (MGRPSLALRLLLALLLLPPPAPLLWA). Topologically, residues 27–365 (LRPAPCPEPC…EDIMGYNFLR (339 aa)) are extracellular. A glycan (N-linked (GlcNAc...) asparagine) is linked at Asn101. LRR repeat units lie at residues 124 to 149 (LPRLKYLSICNTGIHKLPDVTKIFSS), 151 to 173 (FNFILEICDNLHITTIPRNAFQG), 174 to 198 (MNNESITLKLYGNGFEEIQSHAFNG), 200 to 222 (TLISLELKENARLEKMHNDAFRG), 223 to 246 (ATGPSILDISSTKLQALPTYGLES), and 250 to 271 (LIATSSYSLKKLPSREKFTNLL). 2 N-linked (GlcNAc...) asparagine glycosylation sites follow: Asn176 and Asn197. N-linked (GlcNAc...) asparagine glycosylation is found at Asn293, Asn301, and Asn315. At Tyr333 the chain carries Sulfotyrosine. Residues 366–387 (VLIWLINILAITGNVTVLFVLL) form a helical membrane-spanning segment. Residues 388 to 397 (TSRYKLTVPR) are Cytoplasmic-facing. A helical membrane pass occupies residues 398–418 (FLMCNLSFADFCMGLYLLLIA). Residues 419–441 (SVDAQTKGQYYNHAIDWQTGSGC) lie on the Extracellular side of the membrane. An intrachain disulfide couples Cys441 to Cys516. Residues 442-464 (SAAGFFTVFASELSVYTLTVITL) form a helical membrane-spanning segment. Residues 465-484 (ERWHTITYAIQLDQKLRLKH) lie on the Cytoplasmic side of the membrane. A helical transmembrane segment spans residues 485-507 (AIPVMLGGWLFSTLIAVLPLVGV). Topologically, residues 508–527 (SNYMKVSICLPMDVESTLSQ) are extracellular. The chain crosses the membrane as a helical span at residues 528–551 (VYILTILILNVMAFIIICACYIKI). Over 552–572 (YFAVQNPELMATNKDTKIAKK) the chain is Cytoplasmic. The chain crosses the membrane as a helical span at residues 573–596 (MAVLIFTDFTCMAPISFFAISAAF). The Extracellular segment spans residues 597–607 (KVPLITVTNSK). A helical transmembrane segment spans residues 608–629 (VLLVLFYPVNSCANPFLYAIFT). Residues 630–701 (KAFQRDFFLL…VLDKTCYKEC (72 aa)) lie on the Cytoplasmic side of the membrane. S-palmitoyl cysteine attachment occurs at residues Cys645 and Cys646.

It belongs to the G-protein coupled receptor 1 family. FSH/LSH/TSH subfamily. Post-translationally, sulfated.

The protein resides in the cell membrane. Receptor for lutropin-choriogonadotropic hormone. The activity of this receptor is mediated by G proteins which activate adenylate cyclase. The chain is Lutropin-choriogonadotropic hormone receptor (LHCGR) from Bos taurus (Bovine).